The following is a 394-amino-acid chain: MALLDLAQEGMALFGFVLFVVLWLMHFMSIIYTRLHLNKKATDKQPYSKLPGVSLLKPLKGVDPNLINNLETFFELDYPKYEVLLCVQDHDDPAIDVCKKLLGKYPNVDARLFIGGKKVGINPKINNLMPAYEVAKYDLIWICDSGIRVIPDTLTDMVNQMTEKVGLVHGLPYVADRQGFAATLEQVYFGTSHPRSYISANVTGFKCVTGMSCLMRKDVLDQAGGLIAFAQYIAEDYFMAKAIADRGWRFSMSTQVAMQNSGSYSISQFQSRMIRWTKLRINMLPATIICEPISECFVASLIIGWAAHHVFRWDIMVFFMCHCLAWFIFDYIQLRGVQGGTLCFSKLDYAVAWFIRESMTIYIFLSALWDPTISWRTGRYRLRCGGTAEEILDV.

Residues Met1 to Gly10 lie on the Lumenal side of the membrane. The helical transmembrane segment at Met11–Tyr32 threads the bilayer. Over Thr33–Arg195 the chain is Cytoplasmic. Asp92 is a short sequence motif (D1). An N6-acetyllysine modification is found at Lys117. Asp144 is a short sequence motif (D2). Residues Ser196 to Met215 traverse the membrane as a helical segment. Topologically, residues Arg216–Thr287 are lumenal. A short sequence motif (D3) is located at residue Asp236. Asp236 serves as the catalytic Proton acceptor. A (Q/R)XXRW motif is present at residues Arg272 to Trp276. Residues Ile288–Gly304 traverse the membrane as a helical segment. Topologically, residues Trp305 to His309 are cytoplasmic. The chain crosses the membrane as a helical span at residues Val310–Ile328. Residues Phe329 to Asp348 lie on the Lumenal side of the membrane. A helical transmembrane segment spans residues Tyr349–Trp369. Topologically, residues Asp370–Val394 are cytoplasmic.

This sequence belongs to the glycosyltransferase 2 family. As to quaternary structure, interacts with RTN1; regulates the ceramide glucosyltransferase activity of UGCG.

It localises to the golgi apparatus membrane. The catalysed reaction is an N-acylsphing-4-enine + UDP-alpha-D-glucose = a beta-D-glucosyl-(1&lt;-&gt;1')-N-acylsphing-4-enine + UDP + H(+). The enzyme catalyses UDP-alpha-D-xylose + an N-acylsphing-4-enine = a beta-D-xylosyl-(1&lt;-&gt;1')-N-acylsphing-4-enine + UDP + H(+). It carries out the reaction N-(9Z-octadecenoyl)-sphing-4-enine + UDP-alpha-D-xylose = beta-D-xylosyl-(1&lt;-&gt;1')-N-(9Z-octadecenoyl)-sphing-4-enine + UDP + H(+). Its pathway is lipid metabolism; sphingolipid metabolism. In terms of biological role, participates in the initial step of the glucosylceramide-based glycosphingolipid/GSL synthetic pathway at the cytosolic surface of the Golgi. Catalyzes the transfer of glucose from UDP-glucose to ceramide to produce glucosylceramide/GlcCer (such as beta-D-glucosyl-(1&lt;-&gt;1')-N-acylsphing-4-enine). Glucosylceramide is the core component of glycosphingolipids/GSLs, amphipathic molecules consisting of a ceramide lipid moiety embedded in the outer leaflet of the membrane, linked to one of hundreds of different externally oriented oligosaccharide structures. Glycosphingolipids are essential components of membrane microdomains that mediate membrane trafficking and signal transduction. They are implicated in many fundamental cellular processes, including growth, differentiation, migration, morphogenesis, cell-to-cell and cell-to-matrix interactions. They are required for instance in the proper development and functioning of the nervous system. As an example of their role in signal transduction, they regulate the leptin receptor/LEPR in the leptin-mediated signaling pathway. They also play an important role in the establishment of the skin barrier regulating keratinocyte differentiation and the proper assembly of the cornified envelope. The biosynthesis of GSLs is also required for the proper intestinal endocytic uptake of nutritional lipids. Catalyzes the synthesis of xylosylceramide/XylCer (such as beta-D-xylosyl-(1&lt;-&gt;1')-N-acylsphing-4-enine) using UDP-Xyl as xylose donor. The polypeptide is Ceramide glucosyltransferase (Mus musculus (Mouse)).